The primary structure comprises 149 residues: Calmodulin-1 (149 aa).

EF-hand domains are found at residues 8–43 (EQIS…LGQN), 44–79 (PTEA…KMKD), 81–116 (DSEE…LGEK), and 117–149 (LTDE…MMAK). Positions 21, 23, 25, 27, 32, 57, 59, 61, 63, 68, 94, 96, 98, 105, 130, 132, 134, 136, and 141 each coordinate Ca(2+).

It belongs to the calmodulin family. Interacts with ZAR1 (via CaMBD domain). Binds to IQD1. Binds to MEE62 in a calcium-dependent manner.

It is found in the cytoplasm. It localises to the cell membrane. In terms of biological role, calmodulin mediates the control of a large number of enzymes, ion channels and other proteins by Ca(2+). Among the enzymes to be stimulated by the calmodulin-Ca(2+) complex are a number of protein kinases and phosphatases. The sequence is that of Calmodulin-1 (CAM1) from Arabidopsis thaliana (Mouse-ear cress).